Consider the following 392-residue polypeptide: uncharacterized protein (392 aa).

A run of 10 helical transmembrane segments spans residues 2-23 (WLAN…SLYI), 38-60 (SGYV…GRFG), 73-95 (GTGI…LFFL), 153-175 (FTYT…LFGV), 195-217 (VLSY…LIQT), 237-259 (VNLA…LLAR), 272-291 (RILI…QALA), 297-319 (LLVF…TAAI), 331-353 (VLGY…GGII), and 357-379 (FTIS…MLWI).

Belongs to the major facilitator superfamily.

Its subcellular location is the cell membrane. This is an uncharacterized protein from Bacillus subtilis (strain 168).